The chain runs to 1059 residues: Carbamoyl phosphate synthase large chain (1059 aa).

A carboxyphosphate synthetic domain region spans residues 1 to 401 (MPKRQDISKI…AMLKAVRSLE (401 aa)). Residues Arg129, Arg169, Gly175, Gly176, Arg208, Ile210, Glu215, Gly241, Ile242, His243, Gln284, and Glu298 each contribute to the ATP site. The ATP-grasp 1 domain occupies 133–327 (KALMERLNEP…IAKMAAKIAV (195 aa)). Gln284, Glu298, and Asn300 together coordinate Mg(2+). Residues Gln284, Glu298, and Asn300 each contribute to the Mn(2+) site. The interval 402 to 546 (IGAIGLDDIT…YATYEQENES (145 aa)) is oligomerization domain. The interval 547-929 (IISTKKSVLV…ALYKAFIASN (383 aa)) is carbamoyl phosphate synthetic domain. Positions 671-861 (DQVIKELALP…LAQLATRVML (191 aa)) constitute an ATP-grasp 2 domain. Residues Arg707, Ser746, Leu748, Glu752, Gly777, Val778, His779, Ser780, Gln820, and Glu832 each contribute to the ATP site. Mg(2+) is bound by residues Gln820, Glu832, and Asn834. Residues Gln820, Glu832, and Asn834 each contribute to the Mn(2+) site. One can recognise an MGS-like domain in the interval 930–1059 (IKVPRYGNVL…SRSFTVKEMH (130 aa)). The interval 930–1059 (IKVPRYGNVL…SRSFTVKEMH (130 aa)) is allosteric domain.

This sequence belongs to the CarB family. Composed of two chains; the small (or glutamine) chain promotes the hydrolysis of glutamine to ammonia, which is used by the large (or ammonia) chain to synthesize carbamoyl phosphate. Tetramer of heterodimers (alpha,beta)4. Requires Mg(2+) as cofactor. The cofactor is Mn(2+).

It carries out the reaction hydrogencarbonate + L-glutamine + 2 ATP + H2O = carbamoyl phosphate + L-glutamate + 2 ADP + phosphate + 2 H(+). It catalyses the reaction hydrogencarbonate + NH4(+) + 2 ATP = carbamoyl phosphate + 2 ADP + phosphate + 2 H(+). The protein operates within amino-acid biosynthesis; L-arginine biosynthesis; carbamoyl phosphate from bicarbonate: step 1/1. Its pathway is pyrimidine metabolism; UMP biosynthesis via de novo pathway; (S)-dihydroorotate from bicarbonate: step 1/3. Functionally, large subunit of the glutamine-dependent carbamoyl phosphate synthetase (CPSase). CPSase catalyzes the formation of carbamoyl phosphate from the ammonia moiety of glutamine, carbonate, and phosphate donated by ATP, constituting the first step of 2 biosynthetic pathways, one leading to arginine and/or urea and the other to pyrimidine nucleotides. The large subunit (synthetase) binds the substrates ammonia (free or transferred from glutamine from the small subunit), hydrogencarbonate and ATP and carries out an ATP-coupled ligase reaction, activating hydrogencarbonate by forming carboxy phosphate which reacts with ammonia to form carbamoyl phosphate. This is Carbamoyl phosphate synthase large chain from Leuconostoc mesenteroides subsp. mesenteroides (strain ATCC 8293 / DSM 20343 / BCRC 11652 / CCM 1803 / JCM 6124 / NCDO 523 / NBRC 100496 / NCIMB 8023 / NCTC 12954 / NRRL B-1118 / 37Y).